An 801-amino-acid chain; its full sequence is Protocadherin beta-8 (801 aa).

An N-terminal signal peptide occupies residues 1–29 (MEASGKLICRQRQVLFSFLLLGLSLAGAA). The Extracellular segment spans residues 30–691 (EPRSYSVVEE…GQADSLTVYL (662 aa)). Cadherin domains lie at 36-134 (VVEE…SPVF), 139-243 (MLVK…APEF), 248-348 (YRVQ…APEV), 353-452 (FTSP…APAF), and 457-562 (YTLF…SPFV). The cysteines at positions 97 and 103 are disulfide-linked. Asn-419 and Asn-437 each carry an N-linked (GlcNAc...) asparagine glycan. Asn-568 carries an N-linked (GlcNAc...) asparagine glycan. One can recognise a Cadherin 6 domain in the interval 569–672 (SSAPCTELVP…LVDGFSQPYL (104 aa)). A helical transmembrane segment spans residues 692 to 710 (VVALASVSSLFLFSVLLFV). At 711–801 (AVRLCRRSRA…NGFGFSLQLK (91 aa)) the chain is on the cytoplasmic side.

Forms homodimers in trans (molecules expressed by two different cells). Forms promiscuous heterodimers in cis (at the plasma membrane of the same cell) with other protocadherins.

It is found in the cell membrane. Its function is as follows. Calcium-dependent cell-adhesion protein involved in cells self-recognition and non-self discrimination. Thereby, it is involved in the establishment and maintenance of specific neuronal connections in the brain. The chain is Protocadherin beta-8 from Pan troglodytes (Chimpanzee).